The chain runs to 613 residues: Envelope glycoprotein gp95 (613 aa).

The first 62 residues, 1–62 (MEAVIKAVLT…VLCEVTGVRA (62 aa)), serve as a signal peptide directing secretion. A disordered region spans residues 14 to 36 (GETSKKDSKKKPPATSKKDPEKT). Residues 63–559 (DVHLLEQPGN…EWAVHLLKGL (497 aa)) lie on the Extracellular side of the membrane. Cystine bridges form between cysteine 87–cysteine 506, cysteine 121–cysteine 151, cysteine 191–cysteine 252, cysteine 265–cysteine 275, cysteine 360–cysteine 377, cysteine 417–cysteine 453, and cysteine 498–cysteine 505. N-linked (GlcNAc...) asparagine; by host glycosylation is found at asparagine 120, asparagine 140, asparagine 157, asparagine 177, asparagine 230, asparagine 264, asparagine 271, asparagine 297, asparagine 303, asparagine 313, and asparagine 321. The binding to host receptor stretch occupies residues 184-233 (IPSVAGGCIGFTPYDSPAGVYGWDRREVTHILLTDPGNNPFFDKASNSSK). The binding to host receptor stretch occupies residues 268–294 (MRQNWSICQDVWGRGPPENWCTSTGGT). N-linked (GlcNAc...) asparagine; by host glycans are attached at residues asparagine 388 and asparagine 398. The segment at 425–445 (GPTARIFASILAPGVAAAQAL) is fusion peptide. An N-linked (GlcNAc...) asparagine; by host glycan is attached at asparagine 460. An immunosuppression region spans residues 481-497 (LQNRAAIDFLLLAHGHG). N-linked (GlcNAc...) asparagine; by host glycosylation is present at asparagine 508. A helical membrane pass occupies residues 560–580 (LLGLVVILLLVVCLPCLLQIV). Residues cysteine 572 and cysteine 575 are each lipidated (S-palmitoyl cysteine; by host). At 581-613 (CGNIRKMINNSISYHTEYKKLQKAYGQPESRIV) the chain is on the extracellular side. N-linked (GlcNAc...) asparagine; by host glycosylation is present at asparagine 589.

The protein belongs to the Alpharetroviruses envelope glycoprotein family. As to quaternary structure, heterodimer with the transmembrane protein. The mature envelope protein (Env) consists of a trimer of SU-TM heterodimers attached by a labile interchain disulfide bond. Interacts with the host cell entry receptor TVB-S3; this interaction allows the viral attachment. Heterodimer with the surface protein. The mature envelope protein (Env) consists of a trimer of SU-TM heterodimers attached by a labile interchain disulfide bond. Specific enzymatic cleavages in vivo yield mature proteins. Envelope glycoproteins are synthesized as an inactive precursor that is N-glycosylated and processed likely by host cell furin or by a furin-like protease in the Golgi to yield the mature SU and TM proteins. The cleavage site between SU and TM requires the minimal sequence [KR]-X-[KR]-R. In terms of processing, the transmembrane protein is palmitoylated. Palmitoylation is necessary for glycoprotein function and infectivity.

Its subcellular location is the virion membrane. It is found in the host cell membrane. The surface protein (SU) attaches the virus to the host cell entry receptor TVB-S3/CAR1. This interaction triggers the refolding of the transmembrane protein (TM) thereby unmasking its fusion peptide and the formation of a reactive thiolate on Cys-100 to activate its fusogenic potential. Fusion occurs at the host cell plasma membrane. Functionally, the transmembrane protein (TM) acts as a class I viral fusion protein. Under the current model, the protein has at least 3 conformational states: pre-fusion native state, pre-hairpin intermediate state, and post-fusion hairpin state. During viral and target cell membrane fusion, the coiled coil regions (heptad repeats) assume a trimer-of-hairpins structure, positioning the fusion peptide in close proximity to the C-terminal region of the ectodomain. The formation of this structure appears to drive apposition and subsequent fusion of viral and target cell membranes. Membranes fusion leads to delivery of the nucleocapsid into the cytoplasm. In Rous sarcoma virus subgroup B (strain Schmidt-Ruppin) (RSV-SR-B), this protein is Envelope glycoprotein gp95 (env).